A 93-amino-acid polypeptide reads, in one-letter code: Putative septation protein SpoVG (93 aa).

This sequence belongs to the SpoVG family.

In terms of biological role, could be involved in septation. This is Putative septation protein SpoVG from Alkaliphilus oremlandii (strain OhILAs) (Clostridium oremlandii (strain OhILAs)).